The following is a 376-amino-acid chain: uncharacterized protein (376 aa).

Ser-59 carries the post-translational modification Phosphoserine. The Rho-GAP domain occupies 139 to 367; the sequence is VAIEITVQRQ…CLIEHHNAIF (229 aa). The tract at residues 307 to 338 is disordered; that stretch reads RPSRSPKKSNDFETATPWDLLSDEGEGPDASS.

This is an uncharacterized protein from Arabidopsis thaliana (Mouse-ear cress).